The sequence spans 900 residues: Exosome complex component 10 homolog (900 aa).

Disordered regions lie at residues 1–31 (MPRT…SEDV) and 147–174 (TSIE…TGTP). A compositionally biased stretch (basic and acidic residues) spans 8 to 28 (VHQEAKEESAQADQPPKKSAS). In terms of domain architecture, 3'-5' exonuclease spans 273 to 438 (VVDTVEKLKQ…YVYGRMTNDL (166 aa)). Mg(2+) is bound by residues D296, E298, D354, and D423. The 81-residue stretch at 485–565 (DNRQLYALRG…LKARDQPLVK (81 aa)) folds into the HRDC domain. The segment at 731 to 900 (EQLKRKHPQA…FSNVRKEGKK (170 aa)) is disordered. The segment covering 809 to 826 (RKQKKNQFQRGFKAKNRG) has biased composition (basic residues). Low complexity predominate over residues 878-887 (NNRNNKQFNK).

It belongs to the exosome component 10/RRP6 family. As to quaternary structure, component of the RNA exosome complex. Interacts with spn-A/Rad51; the interaction is required for the recruitment of spn-A to the DNA-damage response foci. Interacts with Su(var)3-9, a heterochromatin factor; the interaction promotes association of Rrp6 with a subset of genomic loci. Interacts with Su(var)205, a heterochromatin factor. Interacts with HDAC1, a heterochromatin factor. Mg(2+) serves as cofactor. In terms of tissue distribution, salivary gland (at protein level).

The protein resides in the nucleus. It localises to the chromosome. It is found in the cytoplasm. Its subcellular location is the cell cortex. The protein localises to the cytoskeleton. The protein resides in the microtubule organizing center. It localises to the centrosome. It is found in the spindle. Its subcellular location is the midbody. In terms of biological role, catalytic component of the RNA exosome complex which has 3'-&gt;5' exoribonuclease activity and participates in a multitude of cellular RNA processing and degradation events. Degrades a large variety of non-coding RNAs that are processed by the exosome, such as pre-rRNAs and some small nucleolar RNAs (snoRNAs). Degrades transcripts derived from different types of heterochromatic repeats, such as subtelomeric minisatellites and simple gagaa repeats. Degrades transcripts derived from transposons and transposon fragments. Degrades chromatin-associated transcripts and contributes to the compaction of heterochromatin. Required for the efficient repair of DNA double-strand breaks via homologous recombination after irradiation. Required for cell proliferation and error-free mitosis. This is Exosome complex component 10 homolog from Drosophila melanogaster (Fruit fly).